Here is a 365-residue protein sequence, read N- to C-terminus: tRNA/tmRNA (uracil-C(5))-methyltransferase (365 aa).

Gln189, Tyr217, Asn222, Glu238, and Asp298 together coordinate S-adenosyl-L-methionine. The Nucleophile role is filled by Cys323. Glu357 (proton acceptor) is an active-site residue.

It belongs to the class I-like SAM-binding methyltransferase superfamily. RNA M5U methyltransferase family. TrmA subfamily.

The enzyme catalyses uridine(54) in tRNA + S-adenosyl-L-methionine = 5-methyluridine(54) in tRNA + S-adenosyl-L-homocysteine + H(+). It catalyses the reaction uridine(341) in tmRNA + S-adenosyl-L-methionine = 5-methyluridine(341) in tmRNA + S-adenosyl-L-homocysteine + H(+). Its function is as follows. Dual-specificity methyltransferase that catalyzes the formation of 5-methyluridine at position 54 (m5U54) in all tRNAs, and that of position 341 (m5U341) in tmRNA (transfer-mRNA). The sequence is that of tRNA/tmRNA (uracil-C(5))-methyltransferase from Psychromonas ingrahamii (strain DSM 17664 / CCUG 51855 / 37).